The sequence spans 362 residues: Aminomethyltransferase (362 aa).

Belongs to the GcvT family. The glycine cleavage system is composed of four proteins: P, T, L and H.

It carries out the reaction N(6)-[(R)-S(8)-aminomethyldihydrolipoyl]-L-lysyl-[protein] + (6S)-5,6,7,8-tetrahydrofolate = N(6)-[(R)-dihydrolipoyl]-L-lysyl-[protein] + (6R)-5,10-methylene-5,6,7,8-tetrahydrofolate + NH4(+). Its function is as follows. The glycine cleavage system catalyzes the degradation of glycine. The sequence is that of Aminomethyltransferase from Chlorobium limicola (strain DSM 245 / NBRC 103803 / 6330).